We begin with the raw amino-acid sequence, 266 residues long: uncharacterized protein (266 aa).

Positions 1 to 22 (MGYLKRLVLYIVIMVMSVFIIG) are cleaved as a signal peptide. The N-palmitoyl cysteine moiety is linked to residue cysteine 23. Cysteine 23 carries the S-diacylglycerol cysteine lipid modification.

It belongs to the staphylococcal tandem lipoprotein family.

It is found in the cell membrane. This is an uncharacterized protein from Staphylococcus aureus (strain USA300).